A 187-amino-acid chain; its full sequence is Adenine phosphoribosyltransferase (187 aa).

The protein belongs to the purine/pyrimidine phosphoribosyltransferase family. As to quaternary structure, homodimer.

Its subcellular location is the cytoplasm. The enzyme catalyses AMP + diphosphate = 5-phospho-alpha-D-ribose 1-diphosphate + adenine. It participates in purine metabolism; AMP biosynthesis via salvage pathway; AMP from adenine: step 1/1. Functionally, catalyzes a salvage reaction resulting in the formation of AMP, that is energically less costly than de novo synthesis. The protein is Adenine phosphoribosyltransferase of Yersinia pseudotuberculosis serotype I (strain IP32953).